The chain runs to 330 residues: tRNA dimethylallyltransferase (330 aa).

The span at 1-11 shows a compositional bias: polar residues; sequence MDYSHSDSPST. Residues 1–21 form a disordered region; sequence MDYSHSDSPSTAPAGKTPVDQ. 29–36 provides a ligand contact to ATP; that stretch reads GPTGAGKS. Residue 31 to 36 participates in substrate binding; sequence TGAGKS. The interval 56–59 is interaction with substrate tRNA; that stretch reads DSMQ.

The protein belongs to the IPP transferase family. In terms of assembly, monomer. Requires Mg(2+) as cofactor.

It catalyses the reaction adenosine(37) in tRNA + dimethylallyl diphosphate = N(6)-dimethylallyladenosine(37) in tRNA + diphosphate. Catalyzes the transfer of a dimethylallyl group onto the adenine at position 37 in tRNAs that read codons beginning with uridine, leading to the formation of N6-(dimethylallyl)adenosine (i(6)A). The protein is tRNA dimethylallyltransferase of Corynebacterium urealyticum (strain ATCC 43042 / DSM 7109).